Reading from the N-terminus, the 327-residue chain is uncharacterized protein (327 aa).

Positions 1–24 (MAMACLCLANISWATVCANSTGVA) are cleaved as a signal peptide.

It belongs to the fimbrial protein family.

The protein localises to the fimbrium. Functionally, part of the sfmACDHF fimbrial operon. Could contribute to adhesion to various surfaces in specific environmental niches. Increases adhesion to eukaryotic T24 bladder epithelial cells in the absence of fim genes. This is an uncharacterized protein from Escherichia coli (strain K12).